Consider the following 170-residue polypeptide: UPF0260 protein Rpal_2074 (170 aa).

The protein belongs to the UPF0260 family.

The chain is UPF0260 protein Rpal_2074 from Rhodopseudomonas palustris (strain TIE-1).